We begin with the raw amino-acid sequence, 336 residues long: Dihydroorotate dehydrogenase (quinone) (336 aa).

Residues 62–66 (AGLDK) and Thr-86 contribute to the FMN site. Lys-66 lines the substrate pocket. 111–115 (NRMGF) is a substrate binding site. FMN contacts are provided by Asn-139 and Asn-172. Asn-172 contacts substrate. Catalysis depends on Ser-175, which acts as the Nucleophile. Asn-177 serves as a coordination point for substrate. FMN-binding residues include Lys-217 and Thr-245. 246 to 247 (NT) is a binding site for substrate. FMN-binding positions include Gly-268, Gly-297, and 318-319 (YS).

Belongs to the dihydroorotate dehydrogenase family. Type 2 subfamily. Monomer. FMN is required as a cofactor.

The protein localises to the cell membrane. It carries out the reaction (S)-dihydroorotate + a quinone = orotate + a quinol. It participates in pyrimidine metabolism; UMP biosynthesis via de novo pathway; orotate from (S)-dihydroorotate (quinone route): step 1/1. Functionally, catalyzes the conversion of dihydroorotate to orotate with quinone as electron acceptor. This chain is Dihydroorotate dehydrogenase (quinone), found in Salmonella typhi.